Here is a 103-residue protein sequence, read N- to C-terminus: uncharacterized protein (103 aa).

This is an uncharacterized protein from Archaeoglobus fulgidus (strain ATCC 49558 / DSM 4304 / JCM 9628 / NBRC 100126 / VC-16).